The chain runs to 31 residues: Cytochrome b6-f complex subunit 6 (31 aa).

A helical transmembrane segment spans residues isoleucine 4–glycine 24.

This sequence belongs to the PetL family. In terms of assembly, the 4 large subunits of the cytochrome b6-f complex are cytochrome b6, subunit IV (17 kDa polypeptide, PetD), cytochrome f and the Rieske protein, while the 4 small subunits are PetG, PetL, PetM and PetN. The complex functions as a dimer.

It localises to the plastid. The protein localises to the chloroplast thylakoid membrane. Functionally, component of the cytochrome b6-f complex, which mediates electron transfer between photosystem II (PSII) and photosystem I (PSI), cyclic electron flow around PSI, and state transitions. PetL is important for photoautotrophic growth as well as for electron transfer efficiency and stability of the cytochrome b6-f complex. This Oryza sativa subsp. japonica (Rice) protein is Cytochrome b6-f complex subunit 6.